Consider the following 384-residue polypeptide: Prostaglandin E synthase 2 (384 aa).

Topologically, residues 1-56 are lumenal; sequence MAQAARLSWVLVSSRCALTEGLLTRPWQPLSAQSRAGFTRVAAGSRGAAVRKGSPR. The chain crosses the membrane as a helical span at residues 57 to 73; that stretch reads LLGAAALALGGALGLYH. Over 74-384 the chain is Cytoplasmic; the sequence is TVRWHQRSQD…VHHVNPSCKD (311 aa). Residues 89–192 form the Glutaredoxin domain; sequence SAAQLPLSNS…EVITYYPPMK (104 aa). Glutathione is bound by residues Val147 and 163 to 164; that span reads DS. The 115-residue stretch at 262–376 folds into the GST C-terminal domain; that stretch reads YIVREGKFGA…RAIEEAPSVH (115 aa).

Belongs to the GST superfamily. As to quaternary structure, homodimer. Interacts with EXOSC10. May interact with CEBPB. In terms of processing, synthesized as a Golgi membrane-associated protein, and the proteolytic removal of the N-terminal hydrophobic domain leads to the formation of a mature cytosolic enzyme. Widely expressed. Expressed in brain, heart, liver, colon and lung.

Its subcellular location is the golgi apparatus membrane. The protein resides in the nucleus. It is found in the cytoplasm. The catalysed reaction is prostaglandin H2 = prostaglandin E2. The enzyme catalyses prostaglandin H2 = (12S)-hydroxy-(5Z,8E,10E)-heptadecatrienoate + malonaldehyde. Its pathway is lipid metabolism; prostaglandin biosynthesis. Isomerase activity is increased by sulfhydril compounds. Dithiothreitol (DTT) is most effective, followed by glutathione (GSH) and 2-mercaptoethanol. Its function is as follows. Isomerase that catalyzes the conversion of PGH2 into the more stable prostaglandin E2 (PGE2) (in vitro). The biological function and the GSH-dependent property of PTGES2 is still under debate. In vivo, PTGES2 could form a complex with GSH and heme and would not participate in PGE2 synthesis but would catalyze the degradation of prostaglandin E2 H2 (PGH2) to 12(S)-hydroxy-5(Z),8(E),10(E)-heptadecatrienoic acid (HHT) and malondialdehyde (MDA). May also have transactivation activity toward IFN-gamma (IFNG), possibly via an interaction with CEBPB; however, the relevance of transcription activation activity remains unclear. In Mus musculus (Mouse), this protein is Prostaglandin E synthase 2 (Ptges2).